Consider the following 976-residue polypeptide: Dibasic-processing endoprotease (976 aa).

The signal sequence occupies residues 1–17; it reads MLRKFILGLLLASQAVA. A glycan (N-linked (GlcNAc...) asparagine) is linked at asparagine 156. Residues 172 to 212 are compositionally biased toward basic and acidic residues; that stretch reads AEEAQKAQDDKGDKKEDQKDDKKEGQEAQKEGDKEDNKGDD. A disordered region spans residues 172-246; the sequence is AEEAQKAQDD…VQWKPVDESM (75 aa). A compositionally biased stretch (acidic residues) spans 213 to 231; sequence KEDGEEDDDDDEDEDDDDA. Residues 277 to 595 form the Peptidase S8 domain; it reads QWYLHNVHKA…YGKLDASKIV (319 aa). N-linked (GlcNAc...) asparagine glycosylation is found at asparagine 291 and asparagine 299. Catalysis depends on aspartate 311, which acts as the Charge relay system. Asparagine 336 carries an N-linked (GlcNAc...) asparagine glycan. Active-site charge relay system residues include histidine 349 and serine 528. Residues 524 to 544 traverse the membrane as a helical segment; sequence HGGTSAAAPLAAGVFALALSV. Positions 604–737 constitute a P/Homo B domain; the sequence is VNNQTSFHSE…QLNVFGEQKD (134 aa). An N-linked (GlcNAc...) asparagine glycan is attached at asparagine 606. Residues 733–848 form a disordered region; that stretch reads GEQKDKREEN…SDSHTSWWPD (116 aa). Residues 734-830 are compositionally biased toward basic and acidic residues; sequence EQKDKREENK…EEKPEEKPVD (97 aa). The helical transmembrane segment at 855–875 threads the bilayer; it reads AWLYGAVLLVGGFIAVIGIYA. Asparagine 886 carries N-linked (GlcNAc...) asparagine glycosylation. Positions 914 to 976 are disordered; that stretch reads PEDTHRRSGD…RDNDRQNLLG (63 aa). Composition is skewed to basic and acidic residues over residues 915 to 928 and 940 to 976; these read EDTHRRSGDNDRLY and MFRISDEGEDAHDVEPELNRVSMEADKRDNDRQNLLG.

The protein belongs to the peptidase S8 family. Furin subfamily.

The protein localises to the membrane. The chain is Dibasic-processing endoprotease (XPR6) from Yarrowia lipolytica (strain CLIB 122 / E 150) (Yeast).